A 566-amino-acid chain; its full sequence is MIDFKEKLVDLISQEINDLNVEEIEHLIEIPPQPEMGDYALPCFKFAGIFKKAPNIIAEEIASKIEGNSYFSKVVNTGPYVNFFINKEIFAETVLEEILQKGKYYGARNIGKGKNVIVEFSSPNIAKPFHIGHIRTTVIGHALRNIYNFLGYNAIAINHLGDYGTQFGKLIVALNKWGDKDKIKSNPIPEFLKLYIKFHEEAEKNPELEEKARSWFNRLENKDEEAMDLWKWIRNMSLKEFKRVYDMLGIDFDSYAGESFYSDMMPDVIEEMEEKGLLQESQGAKIVDLEEYNMPPAMIEKSDGSTLYITRDIAAAIYRKKTYNFYKNIYVVGSQQKLHFDQWFKIIELMGHEWARDCIHVPFGMVSLEDGTMSTRKGRVVFLEDVLNKAIEKTKETIEDKNPDLENKEEVAKIVGIGAVIFQELYNSRIKDYVFSWDRTLSFEGETGPYVQYTYVRTKSVLNKSNYKFKKLDDYSLLTDEDAFNVIKLISQFPDTIIKASERYEPSIITRHITELAKAFNKYYHDNQILVDDQKVREARLFLVYAVNTVLKTGLSLLGIKTPEKM.

Residues 123 to 133 (PNIAKPFHIGH) carry the 'HIGH' region motif.

This sequence belongs to the class-I aminoacyl-tRNA synthetase family. In terms of assembly, monomer.

The protein resides in the cytoplasm. The catalysed reaction is tRNA(Arg) + L-arginine + ATP = L-arginyl-tRNA(Arg) + AMP + diphosphate. In Halothermothrix orenii (strain H 168 / OCM 544 / DSM 9562), this protein is Arginine--tRNA ligase.